The primary structure comprises 476 residues: Methylenetetrahydrofolate--tRNA-(uracil-5-)-methyltransferase TrmFO (476 aa).

FAD is bound at residue 14–19 (GGGLAG). The disordered stretch occupies residues 428–447 (LTEPPTHGADGKKLRGPEKS). The segment covering 436–447 (ADGKKLRGPEKS) has biased composition (basic and acidic residues).

The protein belongs to the MnmG family. TrmFO subfamily. FAD is required as a cofactor.

Its subcellular location is the cytoplasm. The catalysed reaction is uridine(54) in tRNA + (6R)-5,10-methylene-5,6,7,8-tetrahydrofolate + NADH + H(+) = 5-methyluridine(54) in tRNA + (6S)-5,6,7,8-tetrahydrofolate + NAD(+). It catalyses the reaction uridine(54) in tRNA + (6R)-5,10-methylene-5,6,7,8-tetrahydrofolate + NADPH + H(+) = 5-methyluridine(54) in tRNA + (6S)-5,6,7,8-tetrahydrofolate + NADP(+). In terms of biological role, catalyzes the folate-dependent formation of 5-methyl-uridine at position 54 (M-5-U54) in all tRNAs. The sequence is that of Methylenetetrahydrofolate--tRNA-(uracil-5-)-methyltransferase TrmFO from Rhodopseudomonas palustris (strain BisA53).